A 422-amino-acid chain; its full sequence is MRDNIAKGITAGSNTQQTTYDPTRTEATLTTATTFALRRYDLAGRALYDLDFSKLNPQTPTRDQTGQITFNPFGGFGLSGAAPQQWNEVKDKVPVEVAQDPSNPYRFAVLLVPRSVVYYEQLQRGLALPNQGSSSGSGQQNTTIGAYGLKVKNAEADTAKSNEKLQGYESKSSNGSSSTSTTQRGGSSNENKVKALQVAVKKKSGSQGNSGDQGTEQVELESNDLANAPIKRGSNNNQQVQLKADDFGTAPSSSGSGTQDGTPTPWTPWLTTEQIHNDPAKFAASILILYDAPYARNRTAIDRVDHLDPKVMTANYPPSWRTPKWNHHGLWDWKARDVLLQTTGFFNPRRHPEWFDGGQTVADNEKTGFDVDNSENTKQGFQKEADSDKSAPIALPFEAYFANIGNLTWFEQALLVFGICLS.

Disordered regions lie at residues 1 to 21, 158 to 218, and 246 to 271; these read MRDNIAKGITAGSNTQQTTYD, TAKS…TEQV, and DFGTAPSSSGSGTQDGTPTPWTPWLT. Residues 11 to 21 are compositionally biased toward polar residues; that stretch reads AGSNTQQTTYD. Over residues 170–199 the composition is skewed to low complexity; the sequence is SKSSNGSSSTSTTQRGGSSNENKVKALQVA. Composition is skewed to polar residues over residues 205–216 and 250–261; these read GSQGNSGDQGTE and APSSSGSGTQDG. The span at 262-271 shows a compositional bias: low complexity; it reads TPTPWTPWLT.

Belongs to the adhesin P1 family.

This is an uncharacterized protein from Mycoplasma pneumoniae (strain ATCC 29342 / M129 / Subtype 1) (Mycoplasmoides pneumoniae).